A 256-amino-acid chain; its full sequence is Sugar fermentation stimulation protein homolog (256 aa).

Belongs to the SfsA family.

The chain is Sugar fermentation stimulation protein homolog from Prochlorococcus marinus (strain MIT 9211).